Here is a 399-residue protein sequence, read N- to C-terminus: Probable sugar efflux transporter (399 aa).

12 consecutive transmembrane segments (helical) span residues 15–35 (VVTL…PVGL), 50–70 (VGMM…PFML), 81–101 (LIGL…AWSF), 103–123 (VLVI…SITS), 136–156 (AQAL…GIPI), 168–188 (MTFL…VKLL), 209–229 (PALV…YTAY), 246–266 (FATV…ILFG), 273–293 (ASGL…LLLP), 301–321 (LMLL…GMQV), 333–353 (VAMS…ALVG), and 364–384 (SIGY…LMIF).

It belongs to the major facilitator superfamily. SotB (TC 2.A.1.2) family.

Its subcellular location is the cell inner membrane. Its function is as follows. Involved in the efflux of sugars. The physiological role may be the reduction of the intracellular concentration of toxic sugars or sugar metabolites. The polypeptide is Probable sugar efflux transporter (Klebsiella pneumoniae (strain 342)).